We begin with the raw amino-acid sequence, 130 residues long: Single-stranded DNA-binding protein 1 (130 aa).

In terms of domain architecture, SSB spans Met-1–Glu-104. The interval Asn-108–Phe-130 is disordered.

Homotetramer.

This Streptococcus pyogenes serotype M18 (strain MGAS8232) protein is Single-stranded DNA-binding protein 1 (ssb1).